A 369-amino-acid chain; its full sequence is MPKMVHRSKTRPVRVGDLVIGGNNEVIIQSMTTTKTHDVEATVAEILRLEEAGCQIVRVACPEERDALALAEIKSRINIPLVVDIHFNYKLALMAIEAGVDKIRINPGNIGRREKVEAVVTAAKAKNIPIRIGVNAGSLEKHILEKYGYPTARGMVESALHHIKILEDLDFHDIIVSLKASDVQLALEAYQLASESFDYPLHVGITESGPLRTGSLKSAAGLGAILSRGIGNTVRVSLSADPVEEVKVAKEVLKSFGLAANAATLISCPTCGRIEIDLMAIAAEIEDYIDKIQVNIKVAVLGCAVNGPGEAREADIGIAGARNEGLLFRHGEIIRKVPEATMVEELKKEIDAIVLEKEAEKEAAKASQA.

Residues cysteine 268, cysteine 271, cysteine 303, and glutamate 310 each contribute to the [4Fe-4S] cluster site.

It belongs to the IspG family. The cofactor is [4Fe-4S] cluster.

The catalysed reaction is (2E)-4-hydroxy-3-methylbut-2-enyl diphosphate + oxidized [flavodoxin] + H2O + 2 H(+) = 2-C-methyl-D-erythritol 2,4-cyclic diphosphate + reduced [flavodoxin]. The protein operates within isoprenoid biosynthesis; isopentenyl diphosphate biosynthesis via DXP pathway; isopentenyl diphosphate from 1-deoxy-D-xylulose 5-phosphate: step 5/6. Its function is as follows. Converts 2C-methyl-D-erythritol 2,4-cyclodiphosphate (ME-2,4cPP) into 1-hydroxy-2-methyl-2-(E)-butenyl 4-diphosphate. The polypeptide is 4-hydroxy-3-methylbut-2-en-1-yl diphosphate synthase (flavodoxin) (Exiguobacterium sibiricum (strain DSM 17290 / CCUG 55495 / CIP 109462 / JCM 13490 / 255-15)).